The sequence spans 324 residues: Glycerol-3-phosphate dehydrogenase [NAD(P)+] (324 aa).

The NADPH site is built by Phe-11, Arg-31, and Lys-107. Sn-glycerol 3-phosphate contacts are provided by Lys-107 and Gly-135. Ala-139 serves as a coordination point for NADPH. Sn-glycerol 3-phosphate contacts are provided by Lys-190, Asp-245, Ser-255, Arg-256, and Asn-257. Lys-190 acts as the Proton acceptor in catalysis. Residue Arg-256 coordinates NADPH. 2 residues coordinate NADPH: Val-278 and Glu-279.

It belongs to the NAD-dependent glycerol-3-phosphate dehydrogenase family.

It localises to the cytoplasm. The catalysed reaction is sn-glycerol 3-phosphate + NAD(+) = dihydroxyacetone phosphate + NADH + H(+). The enzyme catalyses sn-glycerol 3-phosphate + NADP(+) = dihydroxyacetone phosphate + NADPH + H(+). The protein operates within membrane lipid metabolism; glycerophospholipid metabolism. In terms of biological role, catalyzes the reduction of the glycolytic intermediate dihydroxyacetone phosphate (DHAP) to sn-glycerol 3-phosphate (G3P), the key precursor for phospholipid synthesis. The sequence is that of Glycerol-3-phosphate dehydrogenase [NAD(P)+] from Anaplasma phagocytophilum (strain HZ).